Here is a 359-residue protein sequence, read N- to C-terminus: DNA replication and repair protein RecF (359 aa).

30-37 (GQNAQGKT) is an ATP binding site.

It belongs to the RecF family.

It is found in the cytoplasm. The RecF protein is involved in DNA metabolism; it is required for DNA replication and normal SOS inducibility. RecF binds preferentially to single-stranded, linear DNA. It also seems to bind ATP. This chain is DNA replication and repair protein RecF, found in Lactococcus lactis subsp. cremoris (strain SK11).